Here is a 503-residue protein sequence, read N- to C-terminus: Probable cytosol aminopeptidase (503 aa).

2 residues coordinate Mn(2+): K270 and D275. The active site involves K282. Mn(2+)-binding residues include D293, D352, and E354. R356 is a catalytic residue.

Belongs to the peptidase M17 family. It depends on Mn(2+) as a cofactor.

Its subcellular location is the cytoplasm. The enzyme catalyses Release of an N-terminal amino acid, Xaa-|-Yaa-, in which Xaa is preferably Leu, but may be other amino acids including Pro although not Arg or Lys, and Yaa may be Pro. Amino acid amides and methyl esters are also readily hydrolyzed, but rates on arylamides are exceedingly low.. It carries out the reaction Release of an N-terminal amino acid, preferentially leucine, but not glutamic or aspartic acids.. Functionally, presumably involved in the processing and regular turnover of intracellular proteins. Catalyzes the removal of unsubstituted N-terminal amino acids from various peptides. The protein is Probable cytosol aminopeptidase of Salmonella agona (strain SL483).